The sequence spans 429 residues: Keratin, type I cytoskeletal 47 kDa (429 aa).

Residues 1–16 are compositionally biased toward low complexity; that stretch reads MTSYRSSSASYYSGSS. A disordered region spans residues 1 to 20; it reads MTSYRSSSASYYSGSSSKGG. Positions 1–69 are head; sequence MTSYRSSSAS…EAASSSFGGN (69 aa). The segment at 70-105 is coil 1A; the sequence is EKHAMQNLNDRLASYLEKVRALEATNSDLEGKIRNW. Positions 70–385 constitute an IF rod domain; it reads EKHAMQNLND…RLLEGELGQV (316 aa). Residues 106–127 form a linker 1 region; sequence YDKQSDAGIGAGSKDYSKYFEI. The tract at residues 128-219 is coil 1B; that stretch reads IAELRNKIRA…KNHEEEMSHA (92 aa). The interval 220-242 is linker 12; it reads KSQSAGKVSVEMDAALGVDLTSI. Residues 243–381 form a coil 2 region; it reads LNNMRADYEI…QTYRRLLEGE (139 aa). The interval 382 to 429 is tail; that stretch reads LGQVTTVANTSSVESKTESSSTSTTRTRMVKTIVEEVVDGKVVSSRVE. Residues 389-408 form a disordered region; sequence ANTSSVESKTESSSTSTTRT. Residues 391-408 are compositionally biased toward low complexity; it reads TSSVESKTESSSTSTTRT.

This sequence belongs to the intermediate filament family. As to quaternary structure, heterotetramer of two type I and two type II keratins.

The protein is Keratin, type I cytoskeletal 47 kDa (xk81a1) of Xenopus laevis (African clawed frog).